A 420-amino-acid polypeptide reads, in one-letter code: Probable endo-beta-1,4-glucanase celB (420 aa).

The signal sequence occupies residues 1-18 (MLRKLTPLALALLPLVAG). A glycan (N-linked (GlcNAc...) asparagine) is linked at Asn-118. The active-site Nucleophile is the Glu-215. Glu-220 serves as the catalytic Proton donor. Residues Asn-234, Asn-293, and Asn-383 are each glycosylated (N-linked (GlcNAc...) asparagine).

It belongs to the glycosyl hydrolase 7 (cellulase C) family.

It localises to the secreted. It catalyses the reaction Endohydrolysis of (1-&gt;4)-beta-D-glucosidic linkages in cellulose, lichenin and cereal beta-D-glucans.. Has endoglucanase activity on substrates containing beta-1,4 glycosidic bonds, like in carboxymethylcellulose (CMC), hydroxyethylcellulose (HEC) and beta-glucan. Involved in the degradation of complex natural cellulosic substrates. In Aspergillus terreus (strain NIH 2624 / FGSC A1156), this protein is Probable endo-beta-1,4-glucanase celB (celB).